A 245-amino-acid polypeptide reads, in one-letter code: Eukaryotic translation initiation factor 6 (245 aa).

A Phosphotyrosine modification is found at Tyr113. Thr165 carries the post-translational modification Phosphothreonine. Ser166 is subject to Phosphoserine. Ser174 and Ser175 each carry phosphoserine; by CK1. At Ser235 the chain carries Phosphoserine; by PKC. Residues Ser239 and Ser243 each carry the phosphoserine modification.

This sequence belongs to the eIF-6 family. Monomer. Associates with the 60S ribosomal subunit. Interacts with RACK1. Interacts with DICER1, AGO2, TARBP2, MOV10 and RPL7A; they form a large RNA-induced silencing complex (RISC). In terms of processing, phosphorylation at Ser-174 and Ser-175 by CSNK1D/CK1 promotes nuclear export. Post-translationally, ufmylated by UFL1. Expressed at very high levels in colon carcinoma with lower levels in normal colon and ileum and lowest levels in kidney and muscle (at protein level).

The protein localises to the cytoplasm. Its subcellular location is the nucleus. The protein resides in the nucleolus. Its function is as follows. Binds to the 60S ribosomal subunit and prevents its association with the 40S ribosomal subunit to form the 80S initiation complex in the cytoplasm. Behaves as a stimulatory translation initiation factor downstream insulin/growth factors. Is also involved in ribosome biogenesis. Associates with pre-60S subunits in the nucleus and is involved in its nuclear export. Cytoplasmic release of TIF6 from 60S subunits and nuclear relocalization is promoted by a RACK1 (RACK1)-dependent protein kinase C activity. In tissues responsive to insulin, controls fatty acid synthesis and glycolysis by exerting translational control of adipogenic transcription factors such as CEBPB, CEBPD and ATF4 that have G/C rich or uORF in their 5'UTR. Required for ROS-dependent megakaryocyte maturation and platelets formation, controls the expression of mitochondrial respiratory chain genes involved in reactive oxygen species (ROS) synthesis. Involved in miRNA-mediated gene silencing by the RNA-induced silencing complex (RISC). Required for both miRNA-mediated translational repression and miRNA-mediated cleavage of complementary mRNAs by RISC. Modulates cell cycle progression and global translation of pre-B cells, its activation seems to be rate-limiting in tumorigenesis and tumor growth. The polypeptide is Eukaryotic translation initiation factor 6 (Homo sapiens (Human)).